Here is a 457-residue protein sequence, read N- to C-terminus: Bifunctional protein GlmU (457 aa).

The tract at residues 1 to 230 (MSKRYAVVLA…FEESLGVNDR (230 aa)) is pyrophosphorylase. Residues 9–12 (LAAG), Lys23, Gln73, and 78–79 (GT) each bind UDP-N-acetyl-alpha-D-glucosamine. Asp103 is a binding site for Mg(2+). Positions 140, 155, 170, and 228 each coordinate UDP-N-acetyl-alpha-D-glucosamine. Asn228 contributes to the Mg(2+) binding site. The linker stretch occupies residues 231-251 (IALAEASRLMQRRINENHMRN). The tract at residues 252-457 (GVTLVNPENT…GYAKHLNHGK (206 aa)) is N-acetyltransferase. Residues Arg333 and Lys351 each contribute to the UDP-N-acetyl-alpha-D-glucosamine site. The active-site Proton acceptor is the His363. Positions 366 and 377 each coordinate UDP-N-acetyl-alpha-D-glucosamine. Residues 386-387 (NY), Ala423, and Arg440 each bind acetyl-CoA.

The protein in the N-terminal section; belongs to the N-acetylglucosamine-1-phosphate uridyltransferase family. It in the C-terminal section; belongs to the transferase hexapeptide repeat family. In terms of assembly, homotrimer. Requires Mg(2+) as cofactor.

Its subcellular location is the cytoplasm. The catalysed reaction is alpha-D-glucosamine 1-phosphate + acetyl-CoA = N-acetyl-alpha-D-glucosamine 1-phosphate + CoA + H(+). The enzyme catalyses N-acetyl-alpha-D-glucosamine 1-phosphate + UTP + H(+) = UDP-N-acetyl-alpha-D-glucosamine + diphosphate. It functions in the pathway nucleotide-sugar biosynthesis; UDP-N-acetyl-alpha-D-glucosamine biosynthesis; N-acetyl-alpha-D-glucosamine 1-phosphate from alpha-D-glucosamine 6-phosphate (route II): step 2/2. It participates in nucleotide-sugar biosynthesis; UDP-N-acetyl-alpha-D-glucosamine biosynthesis; UDP-N-acetyl-alpha-D-glucosamine from N-acetyl-alpha-D-glucosamine 1-phosphate: step 1/1. Its pathway is bacterial outer membrane biogenesis; LPS lipid A biosynthesis. Functionally, catalyzes the last two sequential reactions in the de novo biosynthetic pathway for UDP-N-acetylglucosamine (UDP-GlcNAc). The C-terminal domain catalyzes the transfer of acetyl group from acetyl coenzyme A to glucosamine-1-phosphate (GlcN-1-P) to produce N-acetylglucosamine-1-phosphate (GlcNAc-1-P), which is converted into UDP-GlcNAc by the transfer of uridine 5-monophosphate (from uridine 5-triphosphate), a reaction catalyzed by the N-terminal domain. This chain is Bifunctional protein GlmU, found in Listeria monocytogenes serotype 4b (strain CLIP80459).